Reading from the N-terminus, the 776-residue chain is Reticulon-1 (776 aa).

Disordered stretches follow at residues Met1–Ser103, Ile136–Ile168, Glu204–Pro244, and Leu285–Pro580. The segment covering Glu204–Asp240 has biased composition (basic and acidic residues). Position 327 is a phosphoserine (Ser327). A compositionally biased stretch (low complexity) spans Pro328–Ser341. Phosphoserine occurs at positions 350, 352, and 487. Positions Ala497–Pro511 are enriched in basic and acidic residues. The Reticulon domain maps to Ala589–Glu776. A run of 2 helical transmembrane segments spans residues Ile603–Val623 and Phe705–Leu725.

In terms of assembly, interacts with NDRG1. Interacts with BACE1. Interacts with TMEM33. Post-translationally, phosphorylated.

The protein localises to the endoplasmic reticulum membrane. It localises to the golgi apparatus membrane. In terms of biological role, inhibits amyloid precursor protein processing, probably by blocking BACE1 activity. The protein is Reticulon-1 (RTN1) of Pan troglodytes (Chimpanzee).